The following is a 496-amino-acid chain: GTPase Der (496 aa).

EngA-type G domains follow at residues 3–166 (PVVA…FDNL) and 208–381 (IKLA…RSAT). Residues 9-16 (GRPNVGKS), 56-60 (DTGGI), 118-121 (NKVD), 214-221 (GRPNVGKS), 261-265 (DTAGV), and 326-329 (NKWD) contribute to the GTP site. The KH-like domain occupies 382-466 (TRVGTSVLTR…PIRIQFQNSD (85 aa)).

The protein belongs to the TRAFAC class TrmE-Era-EngA-EngB-Septin-like GTPase superfamily. EngA (Der) GTPase family. As to quaternary structure, associates with the 50S ribosomal subunit.

Functionally, GTPase that plays an essential role in the late steps of ribosome biogenesis. This is GTPase Der from Vibrio vulnificus (strain YJ016).